Consider the following 404-residue polypeptide: Ubiquitin-like modifier-activating enzyme 5 (404 aa).

S45 is modified (phosphoserine). The ATP site is built by G83, D104, K127, N150, and N184. Positions 226 and 229 each coordinate Zn(2+). Residue C250 is the Glycyl thioester intermediate of the active site. Positions 303 and 308 each coordinate Zn(2+). The UFM1-interacting sequence (UIS) motif lies at 334-346; the sequence is IIHEDNEWGIELV. The tract at residues 347–377 is linker; that stretch reads SEISEEELKKSSGPIPDLPEGIIVAYTVPQK. Phosphoserine occurs at positions 358 and 393. Positions 389–404 match the UFC1-binding sequence (UFC) motif; it reads DSGESLEDLMAKMKNI.

It belongs to the ubiquitin-activating E1 family. UBA5 subfamily. As to quaternary structure, homodimer; homodimerization is required for UFM1 activation. Interacts (via UIS motif) with UFM1; binds UFM1 via a trans-binding mechanism in which UFM1 interacts with distinct sites in both subunits of the UBA5 homodimer. Interacts (via C-terminus) with UFC1. Interacts (via UIS motif) with GABARAPL2 and, with lower affinity, with GABARAP and GABARAPL1.

It localises to the cytoplasm. It is found in the nucleus. The protein resides in the endoplasmic reticulum membrane. Its subcellular location is the golgi apparatus. Its function is as follows. E1-like enzyme which specifically catalyzes the first step in ufmylation. Activates UFM1 by first adenylating its C-terminal glycine residue with ATP, and thereafter linking this residue to the side chain of a cysteine residue in E1, yielding a UFM1-E1 thioester and free AMP. Activates UFM1 via a trans-binding mechanism, in which UFM1 interacts with distinct sites in both subunits of the UBA5 homodimer. Trans-binding also promotes stabilization of the UBA5 homodimer, and enhances ATP-binding. Transfer of UFM1 from UBA5 to the E2-like enzyme UFC1 also takes place using a trans mechanism. Ufmylation plays a key role in various processes, such as ribosome recycling, response to DNA damage, interferon response or reticulophagy (also called ER-phagy). Ufmylation is essential for erythroid differentiation of both megakaryocytes and erythrocytes. This is Ubiquitin-like modifier-activating enzyme 5 from Bos taurus (Bovine).